Here is a 335-residue protein sequence, read N- to C-terminus: Phosphate acyltransferase (335 aa).

This sequence belongs to the PlsX family. As to quaternary structure, homodimer. Probably interacts with PlsY.

It is found in the cytoplasm. The enzyme catalyses a fatty acyl-[ACP] + phosphate = an acyl phosphate + holo-[ACP]. It functions in the pathway lipid metabolism; phospholipid metabolism. In terms of biological role, catalyzes the reversible formation of acyl-phosphate (acyl-PO(4)) from acyl-[acyl-carrier-protein] (acyl-ACP). This enzyme utilizes acyl-ACP as fatty acyl donor, but not acyl-CoA. The protein is Phosphate acyltransferase of Streptococcus equi subsp. equi (strain 4047).